Reading from the N-terminus, the 317-residue chain is 2-oxoglutarate and iron-dependent oxygenase domain-containing protein 3 (317 aa).

Residues 1–34 are disordered; sequence MATRHRRRGGSAPSWAKPGKPGERPGGPKKSRGR. At 1-39 the chain is on the cytoplasmic side; that stretch reads MATRHRRRGGSAPSWAKPGKPGERPGGPKKSRGRTSWKS. Residues 40 to 60 form a helical; Signal-anchor for type II membrane protein membrane-spanning segment; sequence LLIWGVFGVTLGLMAGYYLWG. The Lumenal portion of the chain corresponds to 61 to 317; it reads ELITDDSVTE…EHAIGDPTWT (257 aa). N195 and N213 each carry an N-linked (GlcNAc...) asparagine glycan. A Fe2OG dioxygenase domain is found at 205 to 307; it reads KPTFFSRMNS…AITISFTCNP (103 aa). H228 and D230 together coordinate Fe cation. N265 carries an N-linked (GlcNAc...) asparagine glycan. Residue H286 participates in Fe cation binding. The active site involves R296. R296 provides a ligand contact to 2-oxoglutarate.

It belongs to the OGFOD3 family. The cofactor is Fe(2+). L-ascorbate serves as cofactor.

The protein resides in the membrane. This chain is 2-oxoglutarate and iron-dependent oxygenase domain-containing protein 3 (ogfod3), found in Xenopus tropicalis (Western clawed frog).